Here is a 404-residue protein sequence, read N- to C-terminus: MDAEHFPVGFFRWDQRPAPVVAAAAAPTTTVFNKDHGRPLEVILPMNGRKDLKSLEDLFKEYGVRYVTLAKMTEMGFTANTLVNMTEEEIEDLMKTLVELYHMDLLIGERYGIKSAIRAEKKRLQDSLEMQRLEILSEAERKRILHDDQNTFAAAMASEGTSKELRANDPLIFPESTSADHAPMNIASCKDSTLILQNSNQAQFCGSGLIGVPEHSSESDERKADTNKQKRRRSKEPGEDGEDRPREHPFIVTEPGELARGKKNGLDYLFDLYEQCGKFLLEVQRIAKEKGEKCPTKVTNQVFRHAKHNGAVYINKPKMRHYVHCYALHCLDSEQSNHLRRLYKERGENVGAWRQACYYPLVAIARENNWDIEGIFNRNEKLKIWYVPTKLRQLCHMERSKECQ.

The tract at residues 210-251 (IGVPEHSSESDERKADTNKQKRRRSKEPGEDGEDRPREHPFI) is disordered. 2 stretches are compositionally biased toward basic and acidic residues: residues 215-228 (HSSE…DTNK) and 235-249 (KEPG…REHP). 3 DNA-binding regions span residues 246–250 (REHPF), 315–322 (NKPKMRHY), and 386–389 (YVPT).

The protein belongs to the FLO/LFY family. As to expression, expressed in both male and female cones, vegetative buds and needles, but not in the roots.

The protein resides in the nucleus. Its function is as follows. Probable transcription factor. This is Floricaula/leafy-like protein FL1 from Pinus radiata (Monterey pine).